We begin with the raw amino-acid sequence, 622 residues long: Phosphomethylpyrimidine synthase (622 aa).

Residues Asn226, Met255, Tyr284, His320, 340 to 342 (SRG), 381 to 384 (DGLR), and Glu420 each bind substrate. His424 lines the Zn(2+) pocket. Tyr447 lines the substrate pocket. Residue His488 participates in Zn(2+) binding. [4Fe-4S] cluster contacts are provided by Cys568, Cys571, and Cys576.

The protein belongs to the ThiC family. As to quaternary structure, homodimer. It depends on [4Fe-4S] cluster as a cofactor.

It catalyses the reaction 5-amino-1-(5-phospho-beta-D-ribosyl)imidazole + S-adenosyl-L-methionine = 4-amino-2-methyl-5-(phosphooxymethyl)pyrimidine + CO + 5'-deoxyadenosine + formate + L-methionine + 3 H(+). Its pathway is cofactor biosynthesis; thiamine diphosphate biosynthesis. Catalyzes the synthesis of the hydroxymethylpyrimidine phosphate (HMP-P) moiety of thiamine from aminoimidazole ribotide (AIR) in a radical S-adenosyl-L-methionine (SAM)-dependent reaction. The polypeptide is Phosphomethylpyrimidine synthase (Ruthia magnifica subsp. Calyptogena magnifica).